Here is a 159-residue protein sequence, read N- to C-terminus: Large ribosomal subunit protein uL23m (159 aa).

Belongs to the universal ribosomal protein uL23 family. As to quaternary structure, component of the mitochondrial ribosome large subunit (39S) which comprises a 16S rRNA and about 50 distinct proteins.

Its subcellular location is the mitochondrion. This is Large ribosomal subunit protein uL23m (mrpl-23) from Caenorhabditis briggsae.